The chain runs to 391 residues: Homocitrate synthase AksA (391 aa).

Residues 20 to 271 form the Pyruvate carboxyltransferase domain; it reads ITIYDTTLRD…DLGFNIGVLY (252 aa).

This sequence belongs to the alpha-IPM synthase/homocitrate synthase family.

It carries out the reaction acetyl-CoA + 2-oxoglutarate + H2O = (2R)-homocitrate + CoA + H(+). It catalyses the reaction 2-oxoadipate + acetyl-CoA + H2O = (R)-dihomocitrate + CoA + H(+). The enzyme catalyses 2-oxoheptanedioate + acetyl-CoA + H2O = (R)-trihomocitrate + CoA + H(+). It participates in organic acid metabolism; 2-oxosuberate biosynthesis. Its function is as follows. Catalyzes the condensation of alpha-ketoglutarate and acetyl-CoA to form (R)-homocitrate. Can also catalyze the condensation of alpha-ketoadipate with acetyl-CoA to form (R)-homo(2)citrate, and the condensation of alpha-ketopimelate with acetyl-CoA to form (R)-homo(3)citrate. These reactions are part of the biosynthesis pathway of coenzyme B and biotin. The protein is Homocitrate synthase AksA (aksA) of Methanothermobacter thermautotrophicus (strain ATCC 29096 / DSM 1053 / JCM 10044 / NBRC 100330 / Delta H) (Methanobacterium thermoautotrophicum).